Here is a 75-residue protein sequence, read N- to C-terminus: Exodeoxyribonuclease 7 small subunit (75 aa).

This sequence belongs to the XseB family. In terms of assembly, heterooligomer composed of large and small subunits.

It localises to the cytoplasm. The catalysed reaction is Exonucleolytic cleavage in either 5'- to 3'- or 3'- to 5'-direction to yield nucleoside 5'-phosphates.. Its function is as follows. Bidirectionally degrades single-stranded DNA into large acid-insoluble oligonucleotides, which are then degraded further into small acid-soluble oligonucleotides. The polypeptide is Exodeoxyribonuclease 7 small subunit (Clostridium perfringens (strain ATCC 13124 / DSM 756 / JCM 1290 / NCIMB 6125 / NCTC 8237 / Type A)).